The following is a 101-amino-acid chain: Small ribosomal subunit protein uS14 (101 aa).

Positions M1–N10 are enriched in basic and acidic residues. The tract at residues M1–K23 is disordered. The span at N11–K23 shows a compositional bias: basic residues.

The protein belongs to the universal ribosomal protein uS14 family. In terms of assembly, part of the 30S ribosomal subunit. Contacts proteins S3 and S10.

In terms of biological role, binds 16S rRNA, required for the assembly of 30S particles and may also be responsible for determining the conformation of the 16S rRNA at the A site. The polypeptide is Small ribosomal subunit protein uS14 (Rhodopseudomonas palustris (strain BisB5)).